A 482-amino-acid chain; its full sequence is Aspartyl/glutamyl-tRNA(Asn/Gln) amidotransferase subunit B (482 aa).

Belongs to the GatB/GatE family. GatB subfamily. Heterotrimer of A, B and C subunits.

It catalyses the reaction L-glutamyl-tRNA(Gln) + L-glutamine + ATP + H2O = L-glutaminyl-tRNA(Gln) + L-glutamate + ADP + phosphate + H(+). The enzyme catalyses L-aspartyl-tRNA(Asn) + L-glutamine + ATP + H2O = L-asparaginyl-tRNA(Asn) + L-glutamate + ADP + phosphate + 2 H(+). In terms of biological role, allows the formation of correctly charged Asn-tRNA(Asn) or Gln-tRNA(Gln) through the transamidation of misacylated Asp-tRNA(Asn) or Glu-tRNA(Gln) in organisms which lack either or both of asparaginyl-tRNA or glutaminyl-tRNA synthetases. The reaction takes place in the presence of glutamine and ATP through an activated phospho-Asp-tRNA(Asn) or phospho-Glu-tRNA(Gln). The chain is Aspartyl/glutamyl-tRNA(Asn/Gln) amidotransferase subunit B from Thermotoga neapolitana (strain ATCC 49049 / DSM 4359 / NBRC 107923 / NS-E).